The primary structure comprises 205 residues: Holliday junction branch migration complex subunit RuvA (205 aa).

The domain I stretch occupies residues 1 to 64 (MIGKLKGTID…EDQLRLFGFL (64 aa)). The interval 65–143 (SALEREWFRL…AFAGEMSASI (79 aa)) is domain II. Residues 144–153 (GLKQELGEGV) are flexible linker. Positions 153-205 (VAAAPVSDAVSALTNLGYSRDQAANAVAAALKNGGEGGDSAKLIRLGLKELAR) are domain III.

It belongs to the RuvA family. As to quaternary structure, homotetramer. Forms an RuvA(8)-RuvB(12)-Holliday junction (HJ) complex. HJ DNA is sandwiched between 2 RuvA tetramers; dsDNA enters through RuvA and exits via RuvB. An RuvB hexamer assembles on each DNA strand where it exits the tetramer. Each RuvB hexamer is contacted by two RuvA subunits (via domain III) on 2 adjacent RuvB subunits; this complex drives branch migration. In the full resolvosome a probable DNA-RuvA(4)-RuvB(12)-RuvC(2) complex forms which resolves the HJ.

It is found in the cytoplasm. Functionally, the RuvA-RuvB-RuvC complex processes Holliday junction (HJ) DNA during genetic recombination and DNA repair, while the RuvA-RuvB complex plays an important role in the rescue of blocked DNA replication forks via replication fork reversal (RFR). RuvA specifically binds to HJ cruciform DNA, conferring on it an open structure. The RuvB hexamer acts as an ATP-dependent pump, pulling dsDNA into and through the RuvAB complex. HJ branch migration allows RuvC to scan DNA until it finds its consensus sequence, where it cleaves and resolves the cruciform DNA. In Sinorhizobium fredii (strain NBRC 101917 / NGR234), this protein is Holliday junction branch migration complex subunit RuvA.